We begin with the raw amino-acid sequence, 702 residues long: Putative GMC-type oxidoreductase R135 (702 aa).

A helical membrane pass occupies residues 55–75 (LTGDIVIIGAGAAGSLLAHYL). 58 to 88 (DIVIIGAGAAGSLLAHYLARFSNMKIILLEA) contacts FAD. The active site involves histidine 628.

It belongs to the GMC oxidoreductase family. It depends on FAD as a cofactor.

The protein resides in the virion. It localises to the host membrane. This Acanthamoeba polyphaga (Amoeba) protein is Putative GMC-type oxidoreductase R135.